We begin with the raw amino-acid sequence, 99 residues long: MSSRSHRSRKYQLTRTIPILVLLLVLLSCCNGARTTNVFNTSSPPKQKDVVSPPHDHVHHQVQDHKSVQFLGSLPRQFPVPTSGPSRKHNEIGLSSTKT.

Positions 1–32 (MSSRSHRSRKYQLTRTIPILVLLLVLLSCCNG) are cleaved as a signal peptide. The span at 36–45 (TNVFNTSSPP) shows a compositional bias: polar residues. Disordered stretches follow at residues 36–58 (TNVFNTSSPPKQKDVVSPPHDHV) and 73–99 (SLPRQFPVPTSGPSRKHNEIGLSSTKT). Positions 46 to 58 (KQKDVVSPPHDHV) are enriched in basic and acidic residues.

As to expression, expressed in flowers and seedlings. Detected at the base of pedicel, in the floral abscission zone and in vascular tissues.

The protein resides in the secreted. The protein localises to the extracellular space. Its function is as follows. May be involved in floral abscission. This Arabidopsis thaliana (Mouse-ear cress) protein is Protein IDA-LIKE 3 (IDL3).